The primary structure comprises 295 residues: Protoheme IX farnesyltransferase (295 aa).

9 helical membrane passes run 24-44 (IMYL…GSMH), 45-65 (PFLA…AGAI), 94-114 (SALE…AIAV), 117-137 (ISAA…TIWL), 144-164 (NIVI…AAVT), 171-191 (SFIL…ALSL), 216-236 (KYIL…ALFL), 240-260 (LLYL…AVSV), and 272-292 (MFSY…FCSI).

The protein belongs to the UbiA prenyltransferase family. Protoheme IX farnesyltransferase subfamily.

The protein localises to the cell membrane. It carries out the reaction heme b + (2E,6E)-farnesyl diphosphate + H2O = Fe(II)-heme o + diphosphate. It participates in porphyrin-containing compound metabolism; heme O biosynthesis; heme O from protoheme: step 1/1. Its function is as follows. Converts heme B (protoheme IX) to heme O by substitution of the vinyl group on carbon 2 of heme B porphyrin ring with a hydroxyethyl farnesyl side group. This Wolbachia pipientis wMel protein is Protoheme IX farnesyltransferase.